The sequence spans 101 residues: Large ribosomal subunit protein uL23 (101 aa).

The protein belongs to the universal ribosomal protein uL23 family. Part of the 50S ribosomal subunit. Contacts protein L29, and trigger factor when it is bound to the ribosome.

Functionally, one of the early assembly proteins it binds 23S rRNA. One of the proteins that surrounds the polypeptide exit tunnel on the outside of the ribosome. Forms the main docking site for trigger factor binding to the ribosome. The protein is Large ribosomal subunit protein uL23 of Rhodococcus erythropolis (strain PR4 / NBRC 100887).